Consider the following 80-residue polypeptide: uncharacterized protein (80 aa).

The helical transmembrane segment at Phe-12–Phe-32 threads the bilayer.

The protein resides in the membrane. This is an uncharacterized protein from Saccharomyces cerevisiae (strain ATCC 204508 / S288c) (Baker's yeast).